The primary structure comprises 287 residues: Vesicle-associated protein 4-3 (287 aa).

Positions 1 to 14 (MALTEDKSDSDGRR) are enriched in basic and acidic residues. A disordered region spans residues 1–45 (MALTEDKSDSDGRRWGKFKLPFRNSNSQAPSASSSSSMATSSSSV). Residues 25 to 45 (SNSQAPSASSSSSMATSSSSV) are compositionally biased toward low complexity. In terms of domain architecture, MSP spans 99–221 (RLKLDPSAKL…EEQVMRVVFL (123 aa)).

It belongs to the VAMP-associated protein (VAP) (TC 9.B.17) family.

Functionally, may play a role in vesicle trafficking. This chain is Vesicle-associated protein 4-3 (PVA43), found in Arabidopsis thaliana (Mouse-ear cress).